A 147-amino-acid chain; its full sequence is Large ribosomal subunit protein uL11 (147 aa).

Belongs to the universal ribosomal protein uL11 family. Part of the ribosomal stalk of the 50S ribosomal subunit. Interacts with L10 and the large rRNA to form the base of the stalk. L10 forms an elongated spine to which L12 dimers bind in a sequential fashion forming a multimeric L10(L12)X complex. In terms of processing, one or more lysine residues are methylated.

Forms part of the ribosomal stalk which helps the ribosome interact with GTP-bound translation factors. The chain is Large ribosomal subunit protein uL11 from Bacteroides fragilis (strain ATCC 25285 / DSM 2151 / CCUG 4856 / JCM 11019 / LMG 10263 / NCTC 9343 / Onslow / VPI 2553 / EN-2).